Reading from the N-terminus, the 502-residue chain is Probable cytochrome P450 554A1 (502 aa).

The helical transmembrane segment at 3 to 20 threads the bilayer; the sequence is LLLFIFFLILFYYSVKYY. Residue C448 coordinates heme.

It belongs to the cytochrome P450 family. Heme serves as cofactor.

It is found in the membrane. This Dictyostelium discoideum (Social amoeba) protein is Probable cytochrome P450 554A1 (cyp554A1).